A 434-amino-acid polypeptide reads, in one-letter code: Zinc finger protein Pegasus (434 aa).

Residues 33–57 form a disordered region; sequence VSSDKEAETLQGAGTDSDQNGLDHP. 3 C2H2-type zinc fingers span residues 82 to 104, 110 to 132, and 138 to 161; these read LKCR…IRIH, HRCH…MRSH, and YKCE…RRKH. The segment covering 260-274 has biased composition (polar residues); the sequence is GQLSSLPPDTQNPAS. Positions 260–357 are disordered; that stretch reads GQLSSLPPDT…PSTPAPALPA (98 aa). Over residues 296-313 the composition is skewed to low complexity; it reads CASAVSTSVAQSSSPASP. Residues 337–349 show a composition bias toward polar residues; that stretch reads RTSTPSISNSQPS. 2 C2H2-type zinc fingers span residues 364–386 and 392–419; these read HHCQ…MGCH and FQCN…CCQH.

Belongs to the Ikaros C2H2-type zinc-finger protein family. As to quaternary structure, probably self-associates.

The protein resides in the nucleus. Functionally, transcriptional repressor that binds the core 5'GNNTGTNG-3' DNA consensus sequence. The protein is Zinc finger protein Pegasus (ikzf5) of Xenopus tropicalis (Western clawed frog).